Here is a 926-residue protein sequence, read N- to C-terminus: Storkhead-box protein 2 (926 aa).

Disordered stretches follow at residues 1 to 32 (MKKTRSTTLRRAWPSSDFSDRASDRMRSRSEK), 338 to 393 (EEEK…DIPG), 452 to 529 (EMPF…SYID), 564 to 586 (KEPSSACSLLEPGKTPESMPSYG), 633 to 693 (VKKL…SLDK), 723 to 802 (LLKS…VGTM), and 823 to 926 (TLLT…VTSV). Residues 18 to 32 (FSDRASDRMRSRSEK) are compositionally biased toward basic and acidic residues. Residues 353–378 (HSGRSKKSRTHRKSHGKSRSHSKTRV) show a composition bias toward basic residues. The segment covering 379-393 (SKGDPSDGSHLDIPG) has biased composition (basic and acidic residues). Positions 463–472 (SHSKVHRSHS) are enriched in basic residues. The segment covering 473–495 (HTQDRRSRNERSNKAKERSRSMD) has biased composition (basic and acidic residues). Residues 518-529 (QDDQTPSQSYID) show a composition bias toward polar residues. Composition is skewed to basic and acidic residues over residues 633–658 (VKKLSPSERQTPHSSREPVGHKEESP) and 684–693 (HSAEPSSLDK). Positions 746–769 (LGTSAAQAMPPSQRQQEPGGNQEA) are enriched in polar residues. The segment covering 785-799 (GANKNAEEEKNRDDV) has biased composition (basic and acidic residues). Composition is skewed to polar residues over residues 847 to 884 (MDSSSITVDSGFNSPRTRESLASNTSSIVESNRRQNPA) and 914 to 926 (KPSNCLQASVTSV).

This Mus musculus (Mouse) protein is Storkhead-box protein 2 (Stox2).